The chain runs to 147 residues: Immunity protein YxxD (147 aa).

In terms of assembly, probably interacts with cognate toxin YxiD but not with other non-cognate toxins. The interaction inhibits the toxic activity of YxiD.

It localises to the cytoplasm. Immunity component of one of 6 LXG toxin-immunity modules in this strain. They promote kin selection, mediate competition in biofilms, and drive spatial segregation of different strains, indicating that LXG toxins may help avoid warfare between strains in biofilms. Mediates intercellular competition during biofilm formation; disruption of the operon disadvantages the bacteria, but overexpression of the cognate immunity protein restores growth in competition with wild-type. In situ neutralizes the toxic effect of cognate toxin YxiD. Neutralizes the toxic activity of cognate toxin YxiD upon expression in E.coli. Does not have immunity protein activity on other LXG toxins. The polypeptide is Immunity protein YxxD (yxxD) (Bacillus subtilis (strain 168)).